A 508-amino-acid polypeptide reads, in one-letter code: Photosystem II CP47 reaction center protein (508 aa).

6 helical membrane-spanning segments follow: residues 21–36 (SVHI…WAGS), 101–115 (IVFS…IWHW), 140–156 (GIHL…FGAF), 203–218 (IAAG…FHLS), 237–252 (VLSS…AFVV), and 457–472 (SFAL…HGSR).

It belongs to the PsbB/PsbC family. PsbB subfamily. In terms of assembly, PSII is composed of 1 copy each of membrane proteins PsbA, PsbB, PsbC, PsbD, PsbE, PsbF, PsbH, PsbI, PsbJ, PsbK, PsbL, PsbM, PsbT, PsbX, PsbY, PsbZ, Psb30/Ycf12, at least 3 peripheral proteins of the oxygen-evolving complex and a large number of cofactors. It forms dimeric complexes. The cofactor is Binds multiple chlorophylls. PSII binds additional chlorophylls, carotenoids and specific lipids..

The protein resides in the plastid. It is found in the chloroplast thylakoid membrane. Its function is as follows. One of the components of the core complex of photosystem II (PSII). It binds chlorophyll and helps catalyze the primary light-induced photochemical processes of PSII. PSII is a light-driven water:plastoquinone oxidoreductase, using light energy to abstract electrons from H(2)O, generating O(2) and a proton gradient subsequently used for ATP formation. The polypeptide is Photosystem II CP47 reaction center protein (Fagopyrum esculentum subsp. ancestrale (Wild buckwheat)).